A 491-amino-acid chain; its full sequence is Probable ribonuclease FAU-1 (491 aa).

Belongs to the FAU-1 family.

Probable RNase involved in rRNA stability through maturation and/or degradation of precursor rRNAs. Binds to RNA in loop regions with AU-rich sequences. This Thermofilum pendens (strain DSM 2475 / Hrk 5) protein is Probable ribonuclease FAU-1.